A 388-amino-acid polypeptide reads, in one-letter code: Protein-glutamate methylesterase/protein-glutamine glutaminase (388 aa).

The 119-residue stretch at 20–138 (RVMVVDDSVV…ESAGAEVFRH (119 aa)) folds into the Response regulatory domain. D71 bears the 4-aspartylphosphate mark. The 194-residue stretch at 193 to 386 (PTAPRVLLIG…PKLVRLFSGD (194 aa)) folds into the CheB-type methylesterase domain. Catalysis depends on residues S204, H232, and D328.

This sequence belongs to the CheB family. Phosphorylated by CheA. Phosphorylation of the N-terminal regulatory domain activates the methylesterase activity.

Its subcellular location is the cytoplasm. It carries out the reaction [protein]-L-glutamate 5-O-methyl ester + H2O = L-glutamyl-[protein] + methanol + H(+). It catalyses the reaction L-glutaminyl-[protein] + H2O = L-glutamyl-[protein] + NH4(+). Involved in chemotaxis. Part of a chemotaxis signal transduction system that modulates chemotaxis in response to various stimuli. Catalyzes the demethylation of specific methylglutamate residues introduced into the chemoreceptors (methyl-accepting chemotaxis proteins or MCP) by CheR. Also mediates the irreversible deamidation of specific glutamine residues to glutamic acid. The chain is Protein-glutamate methylesterase/protein-glutamine glutaminase from Rhodopseudomonas palustris (strain HaA2).